A 1213-amino-acid chain; its full sequence is Filamin-A-interacting protein 1 (1213 aa).

The segment at 1 to 70 (MRSRNQGGES…TSGECERKTK (70 aa)) is disordered. Over residues 61-70 (TSGECERKTK) the composition is skewed to basic and acidic residues. S138 is subject to Phosphoserine. Coiled coils occupy residues 192–591 (DYMN…ELSC) and 624–781 (PEDN…LSKR). Disordered stretches follow at residues 878–900 (NGPS…PGEV) and 949–976 (KPRI…GPER). Polar residues-rich tracts occupy residues 880 to 894 (PSIT…NSSP) and 960 to 970 (VMPQKQKSGDT). The residue at position 979 (S979) is a Phosphoserine. The disordered stretch occupies residues 1103-1213 (VSTGTVLRSP…STTSLGGGKG (111 aa)). Over residues 1125-1138 (VTSTITITPVTTSS) the composition is skewed to low complexity. Positions 1139–1156 (ARGTQSVSGQDGSSQRPT) are enriched in polar residues. Residues 1168–1179 (AGKPVVAAPGAG) are compositionally biased toward low complexity.

The protein belongs to the FILIP1 family. As to quaternary structure, interacts with FLNA. Interacts with RHOD (in GTP-bound form). Moderately expressed in adult heart and brain. Weakly expressed in lung, skeletal muscle, ovary, testis, kidney, and fetal brain, and hardly detectable in liver, pancreas, spleen, and fetal liver. Within brain, moderate expression is found in amygdala and caudate nucleus. Expressed in skin fibroblasts.

Its subcellular location is the cytoplasm. The protein resides in the cytoskeleton. In terms of biological role, by acting through a filamin-A/F-actin axis, it controls the start of neocortical cell migration from the ventricular zone. May be able to induce the degradation of filamin-A. The protein is Filamin-A-interacting protein 1 (FILIP1) of Homo sapiens (Human).